Consider the following 136-residue polypeptide: Protein YebF (136 aa).

The first 23 residues, 1–23 (MKKTGLALVLATILLGMMGSVHA), serve as a signal peptide directing secretion. Residues 30–117 (KVPACIGLNQ…KSGTMTYTGL (88 aa)) form the YebF/Cmi domain. C34 and C107 are oxidised to a cystine. Positions 117–136 (LNAQTRPDPQIGLNSQAGPK) are disordered.

It belongs to the YebF family.

The protein resides in the secreted. This Yersinia pseudotuberculosis serotype O:1b (strain IP 31758) protein is Protein YebF.